The primary structure comprises 367 residues: 5-amino-6-(D-ribitylamino)uracil--L-tyrosine 4-hydroxyphenyl transferase (367 aa).

The Radical SAM core domain maps to 54–288 (ITYIENWNIN…VYAISRLMFR (235 aa)). Positions 68, 72, and 75 each coordinate [4Fe-4S] cluster.

Belongs to the radical SAM superfamily. CofH family. In terms of assembly, consists of two subunits, CofG and CofH. It depends on [4Fe-4S] cluster as a cofactor.

The enzyme catalyses 5-amino-6-(D-ribitylamino)uracil + L-tyrosine + S-adenosyl-L-methionine = 5-amino-5-(4-hydroxybenzyl)-6-(D-ribitylimino)-5,6-dihydrouracil + 2-iminoacetate + 5'-deoxyadenosine + L-methionine + H(+). It participates in cofactor biosynthesis; coenzyme F0 biosynthesis. In terms of biological role, catalyzes the radical-mediated synthesis of 5-amino-5-(4-hydroxybenzyl)-6-(D-ribitylimino)-5,6-dihydrouracil from 5-amino-6-(D-ribitylamino)uracil and L-tyrosine. The sequence is that of 5-amino-6-(D-ribitylamino)uracil--L-tyrosine 4-hydroxyphenyl transferase from Methanothermobacter thermautotrophicus (strain ATCC 29096 / DSM 1053 / JCM 10044 / NBRC 100330 / Delta H) (Methanobacterium thermoautotrophicum).